The following is a 364-amino-acid chain: Histidinol-phosphate aminotransferase (364 aa).

The residue at position 226 (lysine 226) is an N6-(pyridoxal phosphate)lysine.

Belongs to the class-II pyridoxal-phosphate-dependent aminotransferase family. Histidinol-phosphate aminotransferase subfamily. Homodimer. Requires pyridoxal 5'-phosphate as cofactor.

The enzyme catalyses L-histidinol phosphate + 2-oxoglutarate = 3-(imidazol-4-yl)-2-oxopropyl phosphate + L-glutamate. It functions in the pathway amino-acid biosynthesis; L-histidine biosynthesis; L-histidine from 5-phospho-alpha-D-ribose 1-diphosphate: step 7/9. The chain is Histidinol-phosphate aminotransferase from Campylobacter jejuni subsp. jejuni serotype O:23/36 (strain 81-176).